The chain runs to 117 residues: uncharacterized protein (117 aa).

Residues 1–20 (METKKLIGKPLQPARPVRHL) form a disordered region.

This is an uncharacterized protein from Homo sapiens (Human).